We begin with the raw amino-acid sequence, 141 residues long: Nucleoside diphosphate kinase (141 aa).

Residues Lys-11, Phe-59, Arg-87, Thr-93, Arg-104, and Asn-114 each contribute to the ATP site. His-117 acts as the Pros-phosphohistidine intermediate in catalysis.

It belongs to the NDK family. In terms of assembly, homotetramer. Mg(2+) serves as cofactor.

Its subcellular location is the cytoplasm. The catalysed reaction is a 2'-deoxyribonucleoside 5'-diphosphate + ATP = a 2'-deoxyribonucleoside 5'-triphosphate + ADP. It catalyses the reaction a ribonucleoside 5'-diphosphate + ATP = a ribonucleoside 5'-triphosphate + ADP. In terms of biological role, major role in the synthesis of nucleoside triphosphates other than ATP. The ATP gamma phosphate is transferred to the NDP beta phosphate via a ping-pong mechanism, using a phosphorylated active-site intermediate. This chain is Nucleoside diphosphate kinase, found in Vibrio vulnificus (strain CMCP6).